We begin with the raw amino-acid sequence, 252 residues long: 5-oxoprolinase subunit A (252 aa).

The protein belongs to the LamB/PxpA family. As to quaternary structure, forms a complex composed of PxpA, PxpB and PxpC.

The enzyme catalyses 5-oxo-L-proline + ATP + 2 H2O = L-glutamate + ADP + phosphate + H(+). Catalyzes the cleavage of 5-oxoproline to form L-glutamate coupled to the hydrolysis of ATP to ADP and inorganic phosphate. This chain is 5-oxoprolinase subunit A, found in Mycobacterium leprae (strain Br4923).